The chain runs to 334 residues: RNA ligase 2 (334 aa).

The interval 1 to 234 (MFKKYSSLEN…KCKNSKFSEK (234 aa)) is adenylyltransferase. Residues E34, K35, I36, N40, R55, and E99 each coordinate AMP. K35 acts as the N6-AMP-lysine intermediate in catalysis. Positions 162, 164, 166, 204, and 206 each coordinate Mg(2+). AMP is bound by residues K225 and K227.

This sequence belongs to the RNA ligase 2 family. The cofactor is Mg(2+). Mn(2+) serves as cofactor.

It catalyses the reaction ATP + (ribonucleotide)n-3'-hydroxyl + 5'-phospho-(ribonucleotide)m = (ribonucleotide)n+m + AMP + diphosphate.. Functionally, repairs 3'-OH/5'-PO4 nicks in duplex RNA or RNA:DNA hybrid in which the broken 3'-OH strand is RNA. The nick ligation reaction entails three nucleotidyl transfer steps. In the first step, the RNA ligase reacts with ATP in the absence of nucleic acid to form a covalent ligase-AMP intermediate and release pyrophosphate. In step 2, the ligase-AMP binds to the nicked duplex nucleic acid and transfers the adenylate to the 5'-PO4 terminus to form an adenylylated nicked intermediate. In step 3, the RNA ligase directs the attack of the nick 3'-OH on the 5'-phosphoanhydride linkage, resulting in a repaired 3' - 5' phosphodiester and release of AMP. The chain is RNA ligase 2 (Y10A) from Enterobacteria phage T4 (Bacteriophage T4).